The chain runs to 1265 residues: Methionine synthase (1265 aa).

Residues 19 to 338 enclose the Hcy-binding domain; the sequence is RDEINAILQK…DHIREIAEAV (320 aa). Residues C260, C323, and C324 each coordinate Zn(2+). The Pterin-binding domain occupies 371 to 632; that stretch reads FVNIGERCNV…IHKELLQLCE (262 aa). (6S)-5,6,7,8-tetrahydrofolate is bound by residues 382–384, D449, N470, D537, N579, R585, and R591; that span reads GSR. A B12-binding N-terminal domain is found at 662–759; that stretch reads QTDEWRNGPV…FMEKEREETR (98 aa). Methylcob(III)alamin-binding positions include E709, 782–786, H785, S830, T834, and A886; that span reads GDVHD. The 136-residue stretch at 772-907 folds into the B12-binding domain; the sequence is QGTIVLATVK…DENLKDEYFE (136 aa). Residues 923–1265 enclose the AdoMet activation domain; the sequence is SLKERRYLPL…LGPILGYDTD (343 aa). S-adenosyl-L-methionine contacts are provided by residues D974, R1172, and 1227 to 1228; that span reads YF. T1264 carries the phosphothreonine modification.

The protein belongs to the vitamin-B12 dependent methionine synthase family. Monomer. Dimer. Forms a multiprotein complex with MMACHC, MMADHC and MTRR. Requires methylcob(III)alamin as cofactor. Zn(2+) serves as cofactor. As to expression, widely expressed. Expressed at the highest levels in pancreas, heart, brain, skeletal muscle and placenta. Expressed at lower levels in lung, liver and kidney.

It is found in the cytoplasm. The enzyme catalyses (6S)-5-methyl-5,6,7,8-tetrahydrofolate + L-homocysteine = (6S)-5,6,7,8-tetrahydrofolate + L-methionine. Its pathway is amino-acid biosynthesis; L-methionine biosynthesis via de novo pathway; L-methionine from L-homocysteine (MetH route): step 1/1. Functionally, catalyzes the transfer of a methyl group from methylcob(III)alamin (MeCbl) to homocysteine, yielding enzyme-bound cob(I)alamin and methionine in the cytosol. MeCbl is an active form of cobalamin (vitamin B12) used as a cofactor for methionine biosynthesis. Cob(I)alamin form is regenerated to MeCbl by a transfer of a methyl group from 5-methyltetrahydrofolate. The processing of cobalamin in the cytosol occurs in a multiprotein complex composed of at least MMACHC, MMADHC, MTRR (methionine synthase reductase) and MTR which may contribute to shuttle safely and efficiently cobalamin towards MTR in order to produce methionine. This is Methionine synthase from Homo sapiens (Human).